A 299-amino-acid polypeptide reads, in one-letter code: Protoheme IX farnesyltransferase 1 (299 aa).

The next 9 membrane-spanning stretches (helical) occupy residues 24–44 (VVAL…PGVP), 46–66 (AAVV…AAMV), 97–117 (LLVA…CCNA), 118–138 (LTAW…TLLL), 146–166 (IVIG…AVNG), 170–190 (AFAL…FWAL), 217–237 (LSIV…VALG), 239–259 (AGAI…FLAV), and 278–298 (IWYL…LIPL).

The protein belongs to the UbiA prenyltransferase family. Protoheme IX farnesyltransferase subfamily.

It is found in the cell inner membrane. The enzyme catalyses heme b + (2E,6E)-farnesyl diphosphate + H2O = Fe(II)-heme o + diphosphate. It participates in porphyrin-containing compound metabolism; heme O biosynthesis; heme O from protoheme: step 1/1. In terms of biological role, converts heme B (protoheme IX) to heme O by substitution of the vinyl group on carbon 2 of heme B porphyrin ring with a hydroxyethyl farnesyl side group. The sequence is that of Protoheme IX farnesyltransferase 1 from Chromobacterium violaceum (strain ATCC 12472 / DSM 30191 / JCM 1249 / CCUG 213 / NBRC 12614 / NCIMB 9131 / NCTC 9757 / MK).